Here is a 152-residue protein sequence, read N- to C-terminus: UPF0756 membrane protein EF_1246 (152 aa).

4 helical membrane passes run 4–24, 52–72, 85–105, and 115–135; these read WLFLLLIALIAFVAKNQSLLI, LGVTIISITILVPIATGQIGL, WLGILCGILVAVLSSKGVGLI, and LVFGTILGVVFLKGIAAGPII.

This sequence belongs to the UPF0756 family.

The protein resides in the cell membrane. The protein is UPF0756 membrane protein EF_1246 of Enterococcus faecalis (strain ATCC 700802 / V583).